The primary structure comprises 841 residues: Probable outer membrane usher protein EcpC (841 aa).

A signal peptide spans 1–29 (MPLRRFSPGLKAQFAFGMVFLFVQPDASA).

This sequence belongs to the EcpC/MatD family.

Part of the ecpRABCDE operon, which encodes the E.coli common pilus (ECP). ECP is found in both commensal and pathogenic strains and plays a dual role in early-stage biofilm development and host cell recognition. The sequence is that of Probable outer membrane usher protein EcpC (ecpC) from Escherichia coli O18:K1:H7 (strain IHE3034 / ExPEC).